A 385-amino-acid chain; its full sequence is AA13 family lytic polysaccharide monooxygenase aasA (385 aa).

Positions 1–18 (MKSLLALVAGNLVTAVSG) are cleaved as a signal peptide. His19 provides a ligand contact to Cu(2+). His19 is subject to Methylhistidine. Residues 19 to 248 (HGYLTVPASR…AQVYLHCADI (230 aa)) are N-terminal catalytic module. Intrachain disulfides connect Cys40–Cys43, Cys66–Cys245, Cys102–Cys203, Cys118–Cys145, Cys153–Cys161, Cys167–Cys173, and Cys181–Cys192. Cu(2+) is bound at residue His109. The N-linked (GlcNAc...) asparagine glycan is linked to Asn120. Tyr242 is a Cu(2+) binding site. The tract at residues 254–276 (SGSSPSPTSTTSTATSTTTPSST) is disordered. Residues 256 to 276 (SSPSPTSTTSTATSTTTPSST) show a composition bias toward low complexity. The region spanning 278–385 (CASAISIPVT…TTATESGAWR (108 aa)) is the CBM20 domain. N-linked (GlcNAc...) asparagine glycosylation is present at Asn364.

It belongs to the polysaccharide monooxygenase AA13 family. Cu(2+) serves as cofactor. The catalytically essential N-terminal histidine His-19 is post-translationally modified by methylation to prevent protonation of the histidine side chain, and protect the critical active site of the enzyme from oxidative damage.

The protein localises to the secreted. The catalysed reaction is starch + reduced acceptor + O2 = D-glucono-1,5-lactone-terminated malto-oligosaccharides + short-chain malto-oligosaccharides + acceptor + H2O.. Starch-active polysaccharide monooxygenase that oxidizes the C1 position of starch substrates, but not in cellulose, chitin, polygalacturonan or esterified pectin, nor with Arabidopsis stem cell walls. Catalysis by LPMOs requires the reduction of the active-site copper from Cu(II) to Cu(I) by a reducing agent and H(2)O(2) or O(2) as a cosubstrate. The sequence is that of AA13 family lytic polysaccharide monooxygenase aasA from Emericella nidulans (strain FGSC A4 / ATCC 38163 / CBS 112.46 / NRRL 194 / M139) (Aspergillus nidulans).